Reading from the N-terminus, the 872-residue chain is Alanine--tRNA ligase (872 aa).

Zn(2+) contacts are provided by H563, H567, C665, and H669.

The protein belongs to the class-II aminoacyl-tRNA synthetase family. It depends on Zn(2+) as a cofactor.

The protein resides in the cytoplasm. It carries out the reaction tRNA(Ala) + L-alanine + ATP = L-alanyl-tRNA(Ala) + AMP + diphosphate. Catalyzes the attachment of alanine to tRNA(Ala) in a two-step reaction: alanine is first activated by ATP to form Ala-AMP and then transferred to the acceptor end of tRNA(Ala). Also edits incorrectly charged Ser-tRNA(Ala) and Gly-tRNA(Ala) via its editing domain. This chain is Alanine--tRNA ligase, found in Bacteroides thetaiotaomicron (strain ATCC 29148 / DSM 2079 / JCM 5827 / CCUG 10774 / NCTC 10582 / VPI-5482 / E50).